The following is a 325-amino-acid chain: Elongation factor P--(R)-beta-lysine ligase (325 aa).

76–78 serves as a coordination point for substrate; sequence SPE. Residues 100 to 102 and N109 each bind ATP; that span reads RNE. Y118 contributes to the substrate binding site. An ATP-binding site is contributed by 244 to 245; sequence EL. Residue E251 participates in substrate binding. G300 provides a ligand contact to ATP.

It belongs to the class-II aminoacyl-tRNA synthetase family. EpmA subfamily. In terms of assembly, homodimer.

It carries out the reaction D-beta-lysine + L-lysyl-[protein] + ATP = N(6)-((3R)-3,6-diaminohexanoyl)-L-lysyl-[protein] + AMP + diphosphate + H(+). Functionally, with EpmB is involved in the beta-lysylation step of the post-translational modification of translation elongation factor P (EF-P). Catalyzes the ATP-dependent activation of (R)-beta-lysine produced by EpmB, forming a lysyl-adenylate, from which the beta-lysyl moiety is then transferred to the epsilon-amino group of a conserved specific lysine residue in EF-P. The protein is Elongation factor P--(R)-beta-lysine ligase of Sodalis glossinidius (strain morsitans).